The sequence spans 475 residues: Bifunctional protein HldE (475 aa).

Residues 1-317 (MQYSAQFNRA…ENAIHGRTTA (317 aa)) form a ribokinase region. 194-197 (NMSE) is a binding site for ATP. Asp263 is an active-site residue. The tract at residues 343 to 475 (MTNGCFDILH…VIKKIQQLKE (133 aa)) is cytidylyltransferase.

In the N-terminal section; belongs to the carbohydrate kinase PfkB family. It in the C-terminal section; belongs to the cytidylyltransferase family. In terms of assembly, homodimer.

The catalysed reaction is D-glycero-beta-D-manno-heptose 7-phosphate + ATP = D-glycero-beta-D-manno-heptose 1,7-bisphosphate + ADP + H(+). It carries out the reaction D-glycero-beta-D-manno-heptose 1-phosphate + ATP + H(+) = ADP-D-glycero-beta-D-manno-heptose + diphosphate. The protein operates within nucleotide-sugar biosynthesis; ADP-L-glycero-beta-D-manno-heptose biosynthesis; ADP-L-glycero-beta-D-manno-heptose from D-glycero-beta-D-manno-heptose 7-phosphate: step 1/4. Its pathway is nucleotide-sugar biosynthesis; ADP-L-glycero-beta-D-manno-heptose biosynthesis; ADP-L-glycero-beta-D-manno-heptose from D-glycero-beta-D-manno-heptose 7-phosphate: step 3/4. Its function is as follows. Catalyzes the phosphorylation of D-glycero-D-manno-heptose 7-phosphate at the C-1 position to selectively form D-glycero-beta-D-manno-heptose-1,7-bisphosphate. Catalyzes the ADP transfer from ATP to D-glycero-beta-D-manno-heptose 1-phosphate, yielding ADP-D-glycero-beta-D-manno-heptose. The protein is Bifunctional protein HldE of Histophilus somni (strain 129Pt) (Haemophilus somnus).